The chain runs to 208 residues: Regulator of G-protein signaling 4 (208 aa).

3 S-palmitoyl cysteine lipidation sites follow: Cys2, Cys12, and Cys95. Positions 62-178 (SLENLIHHDR…LKSPYLDLVS (117 aa)) constitute an RGS domain.

Post-translationally, palmitoylated on Cys-2 and/or Cys-12. In terms of processing, phosphorylated by cyclic GMP-dependent protein kinase. Expressed in the developing nervous system.

Functionally, inhibits signal transduction by increasing the GTPase activity of G protein alpha subunits thereby driving them into their inactive GDP-bound form. Activity on G(z)-alpha is inhibited by phosphorylation of the G-protein. Activity on G(z)-alpha and G(i)-alpha-1 is inhibited by palmitoylation of the G-protein. In Gallus gallus (Chicken), this protein is Regulator of G-protein signaling 4 (RGS4).